The primary structure comprises 353 residues: tRNA N6-adenosine threonylcarbamoyltransferase (353 aa).

Fe cation contacts are provided by His-115 and His-119. Substrate is bound by residues 138–142 (LVSGG), Asp-171, Gly-184, and Asn-276. Asp-304 contributes to the Fe cation binding site.

This sequence belongs to the KAE1 / TsaD family. Fe(2+) serves as cofactor.

It is found in the cytoplasm. The catalysed reaction is L-threonylcarbamoyladenylate + adenosine(37) in tRNA = N(6)-L-threonylcarbamoyladenosine(37) in tRNA + AMP + H(+). In terms of biological role, required for the formation of a threonylcarbamoyl group on adenosine at position 37 (t(6)A37) in tRNAs that read codons beginning with adenine. Is involved in the transfer of the threonylcarbamoyl moiety of threonylcarbamoyl-AMP (TC-AMP) to the N6 group of A37, together with TsaE and TsaB. TsaD likely plays a direct catalytic role in this reaction. In Xanthomonas euvesicatoria pv. vesicatoria (strain 85-10) (Xanthomonas campestris pv. vesicatoria), this protein is tRNA N6-adenosine threonylcarbamoyltransferase.